The following is a 499-amino-acid chain: Rhamnogalacturonate lyase A (499 aa).

The first 20 residues, 1–20, serve as a signal peptide directing secretion; it reads MLSKTSLLSLLSLAAGVVNA. Cystine bridges form between cysteine 49-cysteine 92 and cysteine 183-cysteine 192.

Belongs to the polysaccharide lyase 4 family.

The protein localises to the secreted. It catalyses the reaction Endotype eliminative cleavage of L-alpha-rhamnopyranosyl-(1-&gt;4)-alpha-D-galactopyranosyluronic acid bonds of rhamnogalacturonan I domains in ramified hairy regions of pectin leaving L-rhamnopyranose at the reducing end and 4-deoxy-4,5-unsaturated D-galactopyranosyluronic acid at the non-reducing end.. In terms of biological role, pectinolytic enzymes consist of four classes of enzymes: pectin lyase, polygalacturonase, pectin methylesterase and rhamnogalacturonase. Degrades the rhamnogalacturonan I (RG-I) backbone of pectin. The sequence is that of Rhamnogalacturonate lyase A (rglA) from Aspergillus niger.